Consider the following 392-residue polypeptide: Casein kinase II subunit alpha (392 aa).

Residues Tyr-39–Phe-324 enclose the Protein kinase domain. ATP contacts are provided by residues Leu-45–Val-53 and Lys-68. Asp-156 acts as the Proton acceptor in catalysis. The segment at Met-334–Gly-355 is disordered. Low complexity predominate over residues Ser-337 to Ser-354.

This sequence belongs to the protein kinase superfamily. Ser/Thr protein kinase family. CK2 subfamily. As to quaternary structure, tetramer composed of an alpha chain, an alpha' and two beta chains.

The protein localises to the nucleus. It carries out the reaction L-seryl-[protein] + ATP = O-phospho-L-seryl-[protein] + ADP + H(+). The enzyme catalyses L-threonyl-[protein] + ATP = O-phospho-L-threonyl-[protein] + ADP + H(+). Its function is as follows. Catalytic subunit of a constitutively active serine/threonine-protein kinase complex that phosphorylates a large number of substrates containing acidic residues C-terminal to the phosphorylated serine or threonine. Regulates numerous cellular processes, such as cell cycle progression, apoptosis and transcription, as well as viral infection. May act as a regulatory node which integrates and coordinates numerous signals leading to an appropriate cellular response. During mitosis, functions as a component of the p53/TP53-dependent spindle assembly checkpoint (SAC) that maintains cyclin-B-CDK1 activity and G2 arrest in response to spindle damage. Can also negatively regulate apoptosis. Phosphorylates the caspases CASP9 and CASP2 and the apoptotic regulator NOL3. Phosphorylation protects CASP9 from cleavage and activation by CASP8, and inhibits the dimerization of CASP2 and activation of CASP8. Plays an important role in the circadian clock function by phosphorylating BMAL1. The sequence is that of Casein kinase II subunit alpha (csnk2a1) from Xenopus laevis (African clawed frog).